Reading from the N-terminus, the 184-residue chain is Probable cobalt-precorrin-6B C(15)-methyltransferase (decarboxylating) (184 aa).

S-adenosyl-L-methionine contacts are provided by residues Thr12, Gly36–Gly40, Asp59, and Ala87.

Belongs to the methyltransferase superfamily. Archaeal-type CbiT family.

It carries out the reaction Co-precorrin-6B + S-adenosyl-L-methionine = Co-precorrin-7 + S-adenosyl-L-homocysteine + CO2. It functions in the pathway cofactor biosynthesis; adenosylcobalamin biosynthesis; cob(II)yrinate a,c-diamide from sirohydrochlorin (anaerobic route): step 8/10. Its function is as follows. Catalyzes the methylation of C-15 in cobalt-precorrin-6B followed by the decarboxylation of C-12 to form cobalt-precorrin-7. This chain is Probable cobalt-precorrin-6B C(15)-methyltransferase (decarboxylating), found in Methanosarcina acetivorans (strain ATCC 35395 / DSM 2834 / JCM 12185 / C2A).